Reading from the N-terminus, the 544-residue chain is Phosphoacetylglucosamine mutase (544 aa).

Ser-66 (phosphoserine intermediate) is an active-site residue. Mg(2+)-binding residues include Ser-66, Asp-290, Asp-292, and Asp-294. Residues 387–389 (EAN), 512–516 (RASGT), and Arg-521 contribute to the substrate site.

This sequence belongs to the phosphohexose mutase family. The cofactor is Mg(2+).

The catalysed reaction is N-acetyl-alpha-D-glucosamine 1-phosphate = N-acetyl-D-glucosamine 6-phosphate. The protein operates within nucleotide-sugar biosynthesis; UDP-N-acetyl-alpha-D-glucosamine biosynthesis; N-acetyl-alpha-D-glucosamine 1-phosphate from alpha-D-glucosamine 6-phosphate (route I): step 2/2. In terms of biological role, catalyzes the conversion of GlcNAc-6-P into GlcNAc-1-P during the synthesis of uridine diphosphate/UDP-GlcNAc, which is a biosynthetic precursor of chitin and also supplies the amino sugars for N-linked oligosaccharides of glycoproteins. The sequence is that of Phosphoacetylglucosamine mutase from Candida albicans (Yeast).